The following is a 539-amino-acid chain: Glucose-6-phosphate isomerase (539 aa).

Glutamate 349 functions as the Proton donor in the catalytic mechanism. Catalysis depends on residues histidine 380 and lysine 508. A disordered region spans residues 519–539 (ESGASGQHDPSTAGLIQRLKR).

The protein belongs to the GPI family.

It is found in the cytoplasm. The enzyme catalyses alpha-D-glucose 6-phosphate = beta-D-fructose 6-phosphate. Its pathway is carbohydrate biosynthesis; gluconeogenesis. It participates in carbohydrate degradation; glycolysis; D-glyceraldehyde 3-phosphate and glycerone phosphate from D-glucose: step 2/4. Catalyzes the reversible isomerization of glucose-6-phosphate to fructose-6-phosphate. The sequence is that of Glucose-6-phosphate isomerase from Caulobacter vibrioides (strain ATCC 19089 / CIP 103742 / CB 15) (Caulobacter crescentus).